Reading from the N-terminus, the 1055-residue chain is Activated CDC42 kinase 1 (1055 aa).

The segment at 1–110 (MQPEEGTGWL…PSPTPGSLPG (110 aa)) is SAM-like domain. Residues 91–110 (SQHSQSTFRKPSPTPGSLPG) are disordered. The residue at position 113 (Thr113) is a Phosphothreonine. The Protein kinase domain occupies 126 to 385 (LRLLEKLGDG…PTFVALRDFL (260 aa)). ATP-binding positions include 132–140 (LGDGSFGVV) and Lys158. The active-site Proton acceptor is the Asp252. Tyr284 carries the post-translational modification Phosphotyrosine; by SRC and autocatalysis. One can recognise an SH3 domain in the interval 388-448 (AQPTDMRALQ…PRNVVTSVAG (61 aa)). The CRIB domain maps to 454–466 (ISQPLQNSFIHTG). The interval 505–548 (RPTQHLGRVKREPPPRPPQPAIFTQKTTYDPVSEDPDPLSSDFK) is disordered. A phosphotyrosine mark is found at Pro518 and Tyr533. Residues 638 to 667 (DWDARPLPPPPAYDDVAQDEDDFEVCSINS) form a required for interaction with SRC region. Residues 647 to 650 (PPAY) are required for interaction with NEDD4. Residues 737 to 855 (TGQLTPSPTP…QVIQAPGPRA (119 aa)) form a disordered region. The interval 748–891 (GDDKPQVPPR…PYLERYQRFL (144 aa)) is EBD domain. Composition is skewed to pro residues over residues 753–764 (QVPPRVPIPPRP) and 787–798 (PASPPRVPPREP). The segment covering 817–827 (PLPHRLSSSPG) has biased composition (low complexity). Tyr842 carries the post-translational modification Phosphotyrosine. Position 854 is an omega-N-methylarginine (Arg854). Tyr874 and Tyr887 each carry phosphotyrosine. Ser896 is modified (phosphoserine). Residues 896-952 (SPEEPAALPVPPLLPPPSTPAPAAPTATVRPMPQAAPDPKANFSTNNSNPGARPPSL) form a disordered region. The span at 903 to 918 (LPVPPLLPPPSTPAPA) shows a compositional bias: pro residues. The region spanning 973–1013 (PADKVQMLQAMVHGVTTEECQAALQSHSWSVQRAAQYLKVE) is the UBA domain.

Belongs to the protein kinase superfamily. Tyr protein kinase family. As to quaternary structure, homodimer. Interacts with CSPG4 (activated). Interacts with MERTK (activated); stimulates autophosphorylation. May interact (phosphorylated) with HSP90AB1; maintains kinase activity. Interacts with NPHP1. Interacts with SNX9 (via SH3 domain). Interacts with SRC (via SH2 and SH3 domain). Part of a collagen stimulated complex involved in cell migration composed of CDC42, CRK, TNK2 and BCAR1/p130cas. Interacts with BCAR1/p130cas via SH3 domains. Forms complexes with GRB2 and numerous receptor tyrosine kinases (RTK) including LTK, AXL or PDGFRL, in which GRB2 promotes RTK recruitment by TNK2. Interacts with CDC42. Interacts with EGFR, and this interaction is dependent on EGF stimulation and kinase activity of EGFR. Interacts (via kinase domain) with AKT1. Interacts with NEDD4 (via WW3 domain). NEDD4L and EGF promote association with NEDD4. Mg(2+) is required as a cofactor. Post-translationally, autophosphorylation regulates kinase activity. Phosphorylation on Tyr-533 is required for interaction with SRC and is observed during association with clathrin-coated pits. In terms of processing, polyubiquitinated by NEDD4 and NEDD4L. Degradation can be induced by EGF and is lysosome-dependent. As to expression, ubiquitously present in all tissues tested. Highly expressed in the adult central nervous system (CNS); hippocampus, neocortex, and cerebellum, both at dendritic spines and presynaptic axon terminals. Levels are strongly increased during enhanced neural activity.

It localises to the cell membrane. The protein resides in the nucleus. Its subcellular location is the endosome. The protein localises to the cell junction. It is found in the adherens junction. It localises to the cytoplasmic vesicle membrane. The protein resides in the cytoplasmic vesicle. Its subcellular location is the clathrin-coated vesicle. The protein localises to the membrane. It is found in the clathrin-coated pit. It localises to the cytoplasm. The protein resides in the cytosol. It catalyses the reaction L-tyrosyl-[protein] + ATP = O-phospho-L-tyrosyl-[protein] + ADP + H(+). The enzyme catalyses L-seryl-[protein] + ATP = O-phospho-L-seryl-[protein] + ADP + H(+). The catalysed reaction is L-threonyl-[protein] + ATP = O-phospho-L-threonyl-[protein] + ADP + H(+). Functionally, non-receptor tyrosine-protein and serine/threonine-protein kinase that is implicated in cell spreading and migration, cell survival, cell growth and proliferation. Transduces extracellular signals to cytosolic and nuclear effectors. Phosphorylates AKT1, AR, MCF2, WASL and WWOX. Implicated in trafficking and clathrin-mediated endocytosis through binding to epidermal growth factor receptor (EGFR) and clathrin. Binds to both poly- and mono-ubiquitin and regulates ligand-induced degradation of EGFR, thereby contributing to the accumulation of EGFR at the limiting membrane of early endosomes. Downstream effector of CDC42 which mediates CDC42-dependent cell migration via phosphorylation of BCAR1. May be involved both in adult synaptic function and plasticity and in brain development. Activates AKT1 by phosphorylating it on 'Tyr-176'. Phosphorylates AR on 'Tyr-267' and 'Tyr-363' thereby promoting its recruitment to androgen-responsive enhancers (AREs). Phosphorylates WWOX on 'Tyr-287'. Phosphorylates MCF2, thereby enhancing its activity as a guanine nucleotide exchange factor (GEF) toward Rho family proteins. Contributes to the control of AXL receptor levels. Confers metastatic properties on cancer cells and promotes tumor growth by negatively regulating tumor suppressor such as WWOX and positively regulating pro-survival factors such as AKT1 and AR. The chain is Activated CDC42 kinase 1 (Tnk2) from Mus musculus (Mouse).